Reading from the N-terminus, the 186-residue chain is PR-toxin biosynthesis cluster protein 7 (186 aa).

The chain crosses the membrane as a helical span at residues 24–43 (LGEVTTGGVTPRGTFIFCPI).

Its subcellular location is the membrane. It functions in the pathway sesquiterpene biosynthesis. Part of the gene cluster that mediates the biosynthesis of PR-toxin, a bicyclic sesquiterpene belonging to the eremophilane class and acting as a mycotoxin. The first step of the pathway is catalyzed by the aristolochene synthase which performs the cyclization of trans,trans-farnesyl diphosphate (FPP) to the bicyclic sesquiterpene aristolochene. Following the formation of aristolochene, the non-oxygenated aristolochene is converted to the trioxygenated intermediate eremofortin B, via 7-epi-neopetasone. This conversion appears to involve three enzymes, a hydroxysterol oxidase-like enzyme, the quinone-oxidase prx3 that forms the quinone-type-structure in the bicyclic nucleus of aristolochene with the C8-oxo group and the C-3 hydroxyl group, and the P450 monooxygenase ORF6 that introduces the epoxide at the double bond between carbons 1 and 2. No monoxy or dioxy-intermediates have been reported to be released to the broth, so these three early oxidative reactions may be coupled together. Eremofortin B is further oxidized by another P450 monooxygenase, that introduces a second epoxide between carbons 7 and 11 prior to acetylation to eremofortin A by the acetyltransferase ORF8. The second epoxidation may be performed by a second P450 monooxygenase. After the acetylation step, eremofortin A is converted to eremofortin C and then to PR-toxin. First the conversion of eremofortin A to eremofortin C proceeds by oxidation of the side chain of the molecule at C-12 and is catalyzed by the short-chain oxidoreductase prx1. The cytochrome P450 monooxygenase ORF6 is probably also involved in this step. The primary alcohol formed at C-12 is finally oxidized by the short-chain alcohol dehydrogenase prx4 that forms PR-toxin. This chain is PR-toxin biosynthesis cluster protein 7, found in Penicillium roqueforti (strain FM164).